The chain runs to 431 residues: BEL1-like homeodomain protein 5 (431 aa).

Positions 80–96 (PIYLKAAQELLNEIVNV) are SR/KY domain. Residues 128–199 (GVAALQMKKA…AVKDMISLQI (72 aa)) are BELL domain. A DNA-binding region (homeobox) is located at residues 228-290 (AWRPQRGLPE…NARVRMWKPL (63 aa)). The span at 302-312 (EESRKGSDRYS) shows a compositional bias: basic and acidic residues. A disordered region spans residues 302-333 (EESRKGSDRYSTKGSSSKQPYNNTTSNESSNT). Over residues 313–322 (TKGSSSKQPY) the composition is skewed to polar residues. Residues 323 to 333 (NNTTSNESSNT) are compositionally biased toward low complexity.

The protein belongs to the TALE/BELL homeobox family. In terms of assembly, may form heterodimeric complexes with TALE/KNOX proteins. Interacts with OFP1.

It is found in the nucleus. This chain is BEL1-like homeodomain protein 5 (BLH5), found in Arabidopsis thaliana (Mouse-ear cress).